We begin with the raw amino-acid sequence, 114 residues long: T cell receptor alpha variable 12-3 (114 aa).

An N-terminal signal peptide occupies residues Met-1–Ser-21. One can recognise an Ig-like domain in the interval Lys-24–Ser-114. Asn-44 carries N-linked (GlcNAc...) asparagine glycosylation. An intrachain disulfide couples Cys-45 to Cys-111.

In terms of assembly, alpha-beta TR is a heterodimer composed of an alpha and beta chain; disulfide-linked. The alpha-beta TR is associated with the transmembrane signaling CD3 coreceptor proteins to form the TR-CD3 (TcR or TCR). The assembly of alpha-beta TR heterodimers with CD3 occurs in the endoplasmic reticulum where a single alpha-beta TR heterodimer associates with one CD3D-CD3E heterodimer, one CD3G-CD3E heterodimer and one CD247 homodimer forming a stable octameric structure. CD3D-CD3E and CD3G-CD3E heterodimers preferentially associate with TR alpha and TR beta chains, respectively. The association of the CD247 homodimer is the last step of TcR assembly in the endoplasmic reticulum and is required for transport to the cell surface.

The protein resides in the cell membrane. V region of the variable domain of T cell receptor (TR) alpha chain that participates in the antigen recognition. Alpha-beta T cell receptors are antigen specific receptors which are essential to the immune response and are present on the cell surface of T lymphocytes. Recognize peptide-major histocompatibility (MH) (pMH) complexes that are displayed by antigen presenting cells (APC), a prerequisite for efficient T cell adaptive immunity against pathogens. Binding of alpha-beta TR to pMH complex initiates TR-CD3 clustering on the cell surface and intracellular activation of LCK that phosphorylates the ITAM motifs of CD3G, CD3D, CD3E and CD247 enabling the recruitment of ZAP70. In turn ZAP70 phosphorylates LAT, which recruits numerous signaling molecules to form the LAT signalosome. The LAT signalosome propagates signal branching to three major signaling pathways, the calcium, the mitogen-activated protein kinase (MAPK) kinase and the nuclear factor NF-kappa-B (NF-kB) pathways, leading to the mobilization of transcription factors that are critical for gene expression and essential for T cell growth and differentiation. The T cell repertoire is generated in the thymus, by V-(D)-J rearrangement. This repertoire is then shaped by intrathymic selection events to generate a peripheral T cell pool of self-MH restricted, non-autoaggressive T cells. Post-thymic interaction of alpha-beta TR with the pMH complexes shapes TR structural and functional avidity. In Homo sapiens (Human), this protein is T cell receptor alpha variable 12-3.